A 745-amino-acid polypeptide reads, in one-letter code: Ankyrin repeat and protein kinase domain-containing protein 1 (745 aa).

Positions 34 to 301 (EEEWHLVASG…NVAVETDMLL (268 aa)) constitute a Protein kinase domain. Residues 40-48 (VASGGFSKV) and lysine 63 each bind ATP. The active-site Proton acceptor is the aspartate 157. ANK repeat units lie at residues 369–398 (NRVT…DVDC), 402–431 (SGYT…DTNL), 435–464 (DGWA…LVNA), 468–497 (EGWT…DLSP), 501–530 (EGKT…ELDA), 534–563 (NLRT…LPDA), 567–596 (SGYS…SLEL), 600–629 (QGWT…DLDA), 633–662 (MQWT…NPNA), 666–695 (SGWT…DIHA), and 699–728 (VGWT…QVDV).

This sequence belongs to the protein kinase superfamily. TKL Ser/Thr protein kinase family.

It catalyses the reaction L-seryl-[protein] + ATP = O-phospho-L-seryl-[protein] + ADP + H(+). The catalysed reaction is L-threonyl-[protein] + ATP = O-phospho-L-threonyl-[protein] + ADP + H(+). This chain is Ankyrin repeat and protein kinase domain-containing protein 1 (Ankk1), found in Mus musculus (Mouse).